Consider the following 467-residue polypeptide: 3-isopropylmalate dehydratase large subunit (467 aa).

[4Fe-4S] cluster-binding residues include C347, C407, and C410.

The protein belongs to the aconitase/IPM isomerase family. LeuC type 1 subfamily. Heterodimer of LeuC and LeuD. It depends on [4Fe-4S] cluster as a cofactor.

The catalysed reaction is (2R,3S)-3-isopropylmalate = (2S)-2-isopropylmalate. Its pathway is amino-acid biosynthesis; L-leucine biosynthesis; L-leucine from 3-methyl-2-oxobutanoate: step 2/4. Catalyzes the isomerization between 2-isopropylmalate and 3-isopropylmalate, via the formation of 2-isopropylmaleate. This chain is 3-isopropylmalate dehydratase large subunit, found in Crocosphaera subtropica (strain ATCC 51142 / BH68) (Cyanothece sp. (strain ATCC 51142)).